The chain runs to 611 residues: MAFNFNWSPLMADAGFYTRAQDLLTAALNKSPKPPIIVDDIVVTELNLGSNPPELEILEIGDLAEDRFRGIFKMSYAGDAVLTLKTCVQANPLNTYLLTRHPFTSPQPLAAATGLTIPLQITLSDIKLSGFVILVFSKQKGITVVFRNDPLESLKVSSTFDSIPFVRDYLQKEIEGQLRILFMDELPAIIHRLSLRLWSTEYSELETTCDQVTNPSLEGPGQDPLLNPPQDPVDSFGNVLSISEIASLSLDSGVEMHSLFSRKNALRIAALTDSQRTLSLFTPSIREVVFRAWTGSIEQADGPSGLVSPMSPPLSRTQSHITVASAPLSSQDTASVASSQSRPGLPSSGYSGYGLSLGAARHSKAHARKRKKRVIDLRPHRKPTDDMASISGESSCTDSTITTTTKSAASVYSSSIIPEENNDDDPVTPPVSPVRNSTVRRRQTLRDRIVDRDDAERTNIRRPPIPAEFGHEFPLRPTQPLPSNEIDRNVTSPNPKPEDSHHFQPPRQDTAPIRNIPSAPLGPPAPAPIPASASAYPPEKPTYTQSFPPSFMEVAHNGSILEQAWMMKMASEIARRIQDENSSAMGSYVGSGSGSGGFWDRSHTPPPAYRH.

Residues 1–195 form the SMP-LTD domain; it reads MAFNFNWSPL…LPAIIHRLSL (195 aa). Polar residues predominate over residues 325–342; sequence SAPLSSQDTASVASSQSR. 4 disordered regions span residues 325-347, 361-402, 415-544, and 587-611; these read SAPL…GLPS, RHSK…STIT, SIIP…PTYT, and SYVG…AYRH. The segment covering 361–373 has biased composition (basic residues); it reads RHSKAHARKRKKR. Composition is skewed to basic and acidic residues over residues 374–385 and 444–459; these read VIDLRPHRKPTD and TLRD…ERTN. Over residues 520 to 529 the composition is skewed to pro residues; it reads PLGPPAPAPI.

The protein belongs to the MDM34 family. Component of the ER-mitochondria encounter structure (ERMES) or MDM complex, composed of MMM1, MDM10, MDM12 and MDM34.

The protein localises to the mitochondrion outer membrane. In terms of biological role, component of the ERMES/MDM complex, which serves as a molecular tether to connect the endoplasmic reticulum (ER) and mitochondria. Components of this complex are involved in the control of mitochondrial shape and protein biogenesis, and function in nonvesicular lipid trafficking between the ER and mitochondria. MDM34 is required for the interaction of the ER-resident membrane protein MMM1 and the outer mitochondrial membrane-resident beta-barrel protein MDM10. This chain is Mitochondrial distribution and morphology protein 34, found in Paracoccidioides brasiliensis (strain Pb18).